The primary structure comprises 732 residues: MGRKEDNIAKAMKLIEIPERIRNIDIAAHIDHGKTTLSDNLIAGAGMMSEDLAGKQLLLDYDEQEQARGITINAANASMVHEVDGKEYLINLIDTPGHVDFGGDVTRAMRAVDGTIIVVDSVEGVMPQTETVVRQALKEKVKPVLFINKVDRLINELKLNAEEMQKRFVKIITDVNRLITKYAPPEFSKQWQVNVQAGTVAFGSAYNNWALSVPAMNIFKISFKEIYDYVSTGRQKELAKKAPLHKVVLDMVIKNLPNPREAQKYRIPQIWKGDLDSEIGKAMLSCDDNGPVSMMVTKIIIDPHAGEIAVGRLFSGIIRKGSELYVSGAGKTKVQVLSMMVGPDRIPIDEIAAGNIVAIIGLKGAIAGSTVSSLSDMEPFEPMTHYTDPVVTLAIEAKHTADLPKLIDVLRTISKADPSIQVDINQETGEHLISGMGELHLEVTIYRIKNDYKVDVVTSEPLVVYRETVDKKGGPFEGKSPNKHNRFYFQVEPLPENVVSAILDGKIPEGSKFKDKKAVMANLEEAGLTHDEARGLVCIYGTNVMLDMTKGIQYLDETMELLIESFNEAMDKGPLANEKVYGLKVSLMDAKLHEDSIHRGPAQVIPAGRNSIYGAMCEAGRVLLEPMQKVFISVPQEIMGSVTNELQQRRGVVEDMQQNGEEITIIAKVPVAGMIGFASAIRSATGGKVIWNSENAGYQRVPYEMQKDVVAKIRERKGLKPEPYNEEYYASL.

The region spanning 19 to 260 (ERIRNIDIAA…MVIKNLPNPR (242 aa)) is the tr-type G domain. Residues 28-35 (AHIDHGKT), 94-98 (DTPGH), and 148-151 (NKVD) each bind GTP. Position 598 is a diphthamide (His-598).

This sequence belongs to the TRAFAC class translation factor GTPase superfamily. Classic translation factor GTPase family. EF-G/EF-2 subfamily.

Its subcellular location is the cytoplasm. In terms of biological role, catalyzes the GTP-dependent ribosomal translocation step during translation elongation. During this step, the ribosome changes from the pre-translocational (PRE) to the post-translocational (POST) state as the newly formed A-site-bound peptidyl-tRNA and P-site-bound deacylated tRNA move to the P and E sites, respectively. Catalyzes the coordinated movement of the two tRNA molecules, the mRNA and conformational changes in the ribosome. The chain is Elongation factor 2 from Picrophilus torridus (strain ATCC 700027 / DSM 9790 / JCM 10055 / NBRC 100828 / KAW 2/3).